We begin with the raw amino-acid sequence, 331 residues long: Ketol-acid reductoisomerase (NADP(+)) (331 aa).

The 181-residue stretch at 2–182 (ARLYYDADAN…GGTRAGILET (181 aa)) folds into the KARI N-terminal Rossmann domain. NADP(+) contacts are provided by residues 25 to 28 (YGSQ), S51, S53, and 83 to 86 (DEVQ). H108 is an active-site residue. Position 134 (G134) interacts with NADP(+). Positions 183–328 (TFREETETDL…KDLRAMFSWL (146 aa)) constitute a KARI C-terminal knotted domain. Mg(2+) is bound by residues D191, E195, E227, and E231. Residue S252 coordinates substrate.

It belongs to the ketol-acid reductoisomerase family. Mg(2+) is required as a cofactor.

The catalysed reaction is (2R)-2,3-dihydroxy-3-methylbutanoate + NADP(+) = (2S)-2-acetolactate + NADPH + H(+). It catalyses the reaction (2R,3R)-2,3-dihydroxy-3-methylpentanoate + NADP(+) = (S)-2-ethyl-2-hydroxy-3-oxobutanoate + NADPH + H(+). It participates in amino-acid biosynthesis; L-isoleucine biosynthesis; L-isoleucine from 2-oxobutanoate: step 2/4. The protein operates within amino-acid biosynthesis; L-valine biosynthesis; L-valine from pyruvate: step 2/4. Functionally, involved in the biosynthesis of branched-chain amino acids (BCAA). Catalyzes an alkyl-migration followed by a ketol-acid reduction of (S)-2-acetolactate (S2AL) to yield (R)-2,3-dihydroxy-isovalerate. In the isomerase reaction, S2AL is rearranged via a Mg-dependent methyl migration to produce 3-hydroxy-3-methyl-2-ketobutyrate (HMKB). In the reductase reaction, this 2-ketoacid undergoes a metal-dependent reduction by NADPH to yield (R)-2,3-dihydroxy-isovalerate. This Cyanothece sp. (strain PCC 7425 / ATCC 29141) protein is Ketol-acid reductoisomerase (NADP(+)).